A 130-amino-acid polypeptide reads, in one-letter code: Small ribosomal subunit protein uS8 (130 aa).

The protein belongs to the universal ribosomal protein uS8 family. As to quaternary structure, part of the 30S ribosomal subunit.

Its function is as follows. One of the primary rRNA binding proteins, it binds directly to 16S rRNA central domain where it helps coordinate assembly of the platform of the 30S subunit. This Halorubrum lacusprofundi (strain ATCC 49239 / DSM 5036 / JCM 8891 / ACAM 34) protein is Small ribosomal subunit protein uS8.